The sequence spans 281 residues: Undecaprenyl-diphosphatase 1 (281 aa).

6 helical membrane passes run 95 to 115 (WMVIAGTIPVGLAGVLLKDLI), 119 to 139 (FRNLWITATVLILFSLVFILA), 152 to 172 (LTMKDAVLMGLWQCLALIPGV), 195 to 215 (FSFLLAIPAVLASGLFSLPDA), 227 to 247 (LQLLVGSGIGFVVGYISIAWL), and 256 to 276 (FAWFAAYRIPLGLLVMALLGT).

Belongs to the UppP family.

It is found in the cell membrane. It catalyses the reaction di-trans,octa-cis-undecaprenyl diphosphate + H2O = di-trans,octa-cis-undecaprenyl phosphate + phosphate + H(+). In terms of biological role, catalyzes the dephosphorylation of undecaprenyl diphosphate (UPP). Confers resistance to bacitracin. This is Undecaprenyl-diphosphatase 1 from Corynebacterium jeikeium (strain K411).